Reading from the N-terminus, the 371-residue chain is 2-aminoethylphosphonate--pyruvate transaminase (371 aa).

An N6-(pyridoxal phosphate)lysine modification is found at Lys-198.

Belongs to the class-V pyridoxal-phosphate-dependent aminotransferase family. PhnW subfamily. In terms of assembly, homodimer. The cofactor is pyridoxal 5'-phosphate.

It carries out the reaction (2-aminoethyl)phosphonate + pyruvate = phosphonoacetaldehyde + L-alanine. Its function is as follows. Involved in phosphonate degradation. The protein is 2-aminoethylphosphonate--pyruvate transaminase of Syntrophobacter fumaroxidans (strain DSM 10017 / MPOB).